The sequence spans 446 residues: Saccharopine dehydrogenase [NADP(+), L-glutamate-forming] (446 aa).

NADP(+) is bound by residues 10-13, 33-35, 54-55, I75, 97-98, 124-126, and S174; these read SGFV, CRT, DV, SS, and LDP. Residues 98–99 and D125 contribute to the L-saccharopine site; that span reads SY. Residues R223 and 244–246 each bind L-saccharopine; that span reads TLR.

This sequence belongs to the saccharopine dehydrogenase family. In terms of assembly, interacts with TRM112.

The catalysed reaction is L-saccharopine + NADP(+) + H2O = (S)-2-amino-6-oxohexanoate + L-glutamate + NADPH + H(+). It participates in amino-acid biosynthesis; L-lysine biosynthesis via AAA pathway; L-lysine from L-alpha-aminoadipate (fungal route): step 2/3. The polypeptide is Saccharopine dehydrogenase [NADP(+), L-glutamate-forming] (LYS9) (Saccharomyces cerevisiae (strain ATCC 204508 / S288c) (Baker's yeast)).